Consider the following 234-residue polypeptide: MAHTTPRSHPPPHSLLQNLTTQSLLLSHLFTLIASPPNPNTSTQTQLNQVYSALQLSTLDLSGLVKEVGHHQEAYRRLVEKKNEVAGLEMRVRGLVKRLEEGRKELEGMIDQGERSLEDIQKSEREPVPAKTLMAHAQSLSKHSSAPVSSLLAPVDKAQYAPWPTEMSMRMGLLFQLEGSMSGMGERGVVGEEQKAPQKVEERREHVEHEESGRRYDPNAVFQLDLNSDESDED.

A coiled-coil region spans residues 71-124; that stretch reads HQEAYRRLVEKKNEVAGLEMRVRGLVKRLEEGRKELEGMIDQGERSLEDIQKSE. The tract at residues 188 to 234 is disordered; sequence GVVGEEQKAPQKVEERREHVEHEESGRRYDPNAVFQLDLNSDESDED. Positions 189–217 are enriched in basic and acidic residues; sequence VVGEEQKAPQKVEERREHVEHEESGRRYD.

It belongs to the Mediator complex subunit 4 family. In terms of assembly, component of the Mediator complex.

The protein localises to the nucleus. Functionally, component of the Mediator complex, a coactivator involved in the regulated transcription of nearly all RNA polymerase II-dependent genes. Mediator functions as a bridge to convey information from gene-specific regulatory proteins to the basal RNA polymerase II transcription machinery. Mediator is recruited to promoters by direct interactions with regulatory proteins and serves as a scaffold for the assembly of a functional preinitiation complex with RNA polymerase II and the general transcription factors. The sequence is that of Mediator of RNA polymerase II transcription subunit 4 (MED4) from Cryptococcus neoformans var. neoformans serotype D (strain B-3501A) (Filobasidiella neoformans).